The chain runs to 85 residues: Small ribosomal subunit protein uS17 (85 aa).

Belongs to the universal ribosomal protein uS17 family. In terms of assembly, part of the 30S ribosomal subunit.

Its function is as follows. One of the primary rRNA binding proteins, it binds specifically to the 5'-end of 16S ribosomal RNA. This Lachnospira eligens (strain ATCC 27750 / DSM 3376 / VPI C15-48 / C15-B4) (Eubacterium eligens) protein is Small ribosomal subunit protein uS17.